A 231-amino-acid polypeptide reads, in one-letter code: MSTEAALLKLQSWFSPSFPVGGYTYSHGLEYGVECGLIHHRESLQTWLEGLLQWGAGHGEGVLFHGAYGAAVRQDWAALHEVTVWAQALRPTAELALESRGQGRAFLVAVQQGWPHPWVQRWGDGLAEHAPYGVVTGLACAAHGVPEAMGLSALLHGMVAGWISAAVRLIPLGQQAGVLVQSALEGEIQTLVRALLSQPASAFQAELGGCAWMAEWCSLKHETQYTRLFRS.

It belongs to the UreF family. As to quaternary structure, ureD, UreF and UreG form a complex that acts as a GTP-hydrolysis-dependent molecular chaperone, activating the urease apoprotein by helping to assemble the nickel containing metallocenter of UreC. The UreE protein probably delivers the nickel.

It is found in the cytoplasm. Required for maturation of urease via the functional incorporation of the urease nickel metallocenter. This chain is Urease accessory protein UreF, found in Magnetococcus marinus (strain ATCC BAA-1437 / JCM 17883 / MC-1).